The sequence spans 123 residues: Protein Wnt-7a (123 aa).

A lipid anchor (O-palmitoleoyl serine; by PORCN) is attached at serine 1. The interval 33–61 (VEPVRASRNKRPTFLKIKKPLSYLKPMDT) is disordered linker. Cysteine 89 and cysteine 104 are oxidised to a cystine. Residue asparagine 90 is glycosylated (N-linked (GlcNAc...) asparagine).

It belongs to the Wnt family. In terms of processing, palmitoleoylation is required for efficient binding to frizzled receptors. Depalmitoleoylation leads to Wnt signaling pathway inhibition.

The protein localises to the secreted. The protein resides in the extracellular space. It is found in the extracellular matrix. Its function is as follows. Ligand for members of the frizzled family of seven transmembrane receptors that functions in the canonical Wnt/beta-catenin signaling pathway. Plays an important role in embryonic development, including dorsal versus ventral patterning during limb development, skeleton development and urogenital tract development. Required for central nervous system (CNS) angiogenesis and blood-brain barrier regulation. This Plethodon jordani (Red-cheeked salamander) protein is Protein Wnt-7a (WNT-7A).